The following is a 354-amino-acid chain: MIESITSFGTATFGGWWPLVWTLVRAVCIILPLLLCVAYLILWERKLIGWMHVRLGPNRVGPMGLLQPIADVLKLLLKEVMVPSAVSRGMYIIAPLMVLMPAVAIWAVIPFQAEAMVSNINAGLLYVMAISSVGVYGVILAGWASNSKYAFLGAMRASAQMISYEIAMGFALVTVLMVTGSLNLSDIVNSQNRGFFAGHGINILSWNWLPLLPMFGVYFISGVAETNRHPFDVVEGESEIVAGHMIEYSGMAFALFFLAEYINMIVISALTATLFLGGWASPIDAPVLNWIPGFFWLLIKVFLLLSVFIWLRASFPRYRYDQIMRLGWKIFIPLTVGWLVVVAIWLVSPWNIWK.

Helical transmembrane passes span 23-43 (LVRA…LILW), 91-111 (YIIA…VIPF), 124-144 (LLYV…AGWA), 162-182 (ISYE…TGSL), 203-223 (ILSW…ISGV), 250-270 (GMAF…ISAL), 291-311 (IPGF…FIWL), and 330-350 (IFIP…VSPW).

The protein belongs to the complex I subunit 1 family. In terms of assembly, NDH-1 is composed of 14 different subunits. Subunits NuoA, H, J, K, L, M, N constitute the membrane sector of the complex.

It is found in the cell inner membrane. It catalyses the reaction a quinone + NADH + 5 H(+)(in) = a quinol + NAD(+) + 4 H(+)(out). Its function is as follows. NDH-1 shuttles electrons from NADH, via FMN and iron-sulfur (Fe-S) centers, to quinones in the respiratory chain. The immediate electron acceptor for the enzyme in this species is believed to be ubiquinone. Couples the redox reaction to proton translocation (for every two electrons transferred, four hydrogen ions are translocated across the cytoplasmic membrane), and thus conserves the redox energy in a proton gradient. This subunit may bind ubiquinone. This is NADH-quinone oxidoreductase subunit H from Ralstonia pickettii (strain 12J).